Reading from the N-terminus, the 995-residue chain is Endo-beta-N-acetylglucosaminidase EndoS (995 aa).

The signal sequence occupies residues 1 to 36 (MDKHLLVKRTLGCVCAATLMGAALATHHDSLNTVKA). Residues 112 to 432 (SLYGGYFRTW…KDATDNIFHS (321 aa)) form the GH18 domain. Residues His151, Trp153, and Arg186 each contribute to the a glycoprotein site. Residue Glu235 is the Proton donor of the active site. Residues Asp237, Gln303, Tyr305, Glu349, Glu350, Asn356, and Tyr402 each contribute to the a glycoprotein site. 4 LRR repeats span residues 437–460 (SKALKTVMLKDKSYDLIDEKDFPD), 478–503 (LERFNGTLRLDNPAIQSLEGLNKFKK), 562–585 (LTGLKELDLSGFDRETLAGLDAAT), and 586–609 (LTSLEKVDISGNKLDLAPGTENRQ). A carbohydrate-binding module (CBM) region spans residues 765–923 (MVNLAEGATV…VPELQILGYP (159 aa)). The Ca(2+) site is built by Lys786, Asp789, Gln791, Pro915, and Glu916. Residues 924–995 (LPNADTIMKT…CIEKRQLLKK (72 aa)) form a three-helix bundle (3H) region.

It belongs to the glycosyl hydrolase 18 family. Cleaved by SpeB protease; leading to loss of endoglucosidase activity. EndoS is produced and secreted prior to SpeB, suggesting that it is degraded after acting as a host immune evasion factor.

The protein resides in the secreted. Its subcellular location is the host extracellular space. It carries out the reaction an N(4)-(oligosaccharide-(1-&gt;3)-[oligosaccharide-(1-&gt;6)]-beta-D-Man-(1-&gt;4)-beta-D-GlcNAc-(1-&gt;4)-alpha-D-GlcNAc)-L-asparaginyl-[protein] + H2O = an oligosaccharide-(1-&gt;3)-[oligosaccharide-(1-&gt;6)]-beta-D-Man-(1-&gt;4)-D-GlcNAc + N(4)-(N-acetyl-beta-D-glucosaminyl)-L-asparaginyl-[protein]. Its function is as follows. Endoglucosidase that acts as a host immune evasion factor by mediating hydrolysis of the N-linked glycan from the Fc region of host immunoglobulin-gamma (IgG) during infection. Specifically catalyzes the hydrolysis of the beta-1,4 linkage between the first two N-acetylglucosamine residues of the complex-type N-linked glycan located on 'Asn-297' of the Fc region of IgG antibodies (IGHG1, IGHG2, IGHG3 or IGHG4), thereby preventing interaction between IgGs and Fc receptors and ability to activate the complement pathway. Shows a specificity for biantennary complex type N-glycans; does neither cleave larger complex type glycans nor oligomannose and nor hybrid-type glycans. Specifically acts on IgGs; does not act on immunoglobulin alpha, beta, delta or mu. The sequence is that of Endo-beta-N-acetylglucosaminidase EndoS from Streptococcus pyogenes serotype M1.